Here is a 238-residue protein sequence, read N- to C-terminus: Thrombin-like enzyme AhV_TL-I (238 aa).

A Peptidase S1 domain is found at 1-229 (IIGGDECNIN…HLDWIENIIA (229 aa)). 6 disulfide bridges follow: cysteine 7-cysteine 141, cysteine 28-cysteine 44, cysteine 76-cysteine 236, cysteine 120-cysteine 190, cysteine 152-cysteine 169, and cysteine 180-cysteine 205. Histidine 43 (charge relay system) is an active-site residue. N-linked (GlcNAc...) asparagine glycosylation occurs at asparagine 81. Aspartate 88 serves as the catalytic Charge relay system. Catalysis depends on serine 184, which acts as the Charge relay system.

It belongs to the peptidase S1 family. Snake venom subfamily. As to quaternary structure, monomer. In terms of processing, N-glycosylated at Asn-81 by a disaccharide composed of two N-acetylglucosamine (NAG). The presence of this N-glycan deforms the enzyme and Removing the carbohydrate moiety increases the esterase activity, but induces a complete loss of contractile response on mouse thoracic aorta. In terms of tissue distribution, expressed by the venom gland.

It is found in the secreted. Its activity is regulated as follows. Inhibited by PMSF, L-cysteine and partially by SBTI and leupeptin. Functionally, thrombin-like enzyme that shows fibrinogenolytic activity against both the Aalpha (FGA) and Bbeta (FGB) chains of bovine fibrinogen. This enzyme has poor esterolytic activity upon BAEE substrate. It induces mouse thoracic aortic ring contraction with EC(50)=147 nmol/L. It shows vasoconstrictor effects that are independent of the enzymatic activity, but related to the release of calcium ions form the calcium store, potentially through the activation of ryanodine receptors. In Gloydius halys (Chinese water mocassin), this protein is Thrombin-like enzyme AhV_TL-I.